Consider the following 897-residue polypeptide: Molybdenum import ATP-binding protein ModC 2 (897 aa).

In terms of domain architecture, ABC transporter spans 6–236 (RGRIDAAFRG…PALPLAYSRD (231 aa)). ATP is bound at residue 38–45 (GPSGCGKT). Residues 295–365 (ESSILNILPA…VKGVSLVRAS (71 aa)) enclose the Mop domain. The interval 823-848 (LGDRSVLGPREPDAGAKGRKRQNDPE) is disordered. Residues 832–848 (REPDAGAKGRKRQNDPE) are compositionally biased toward basic and acidic residues.

The protein belongs to the ABC transporter superfamily. Molybdate importer (TC 3.A.1.8) family. In terms of assembly, the complex is composed of two ATP-binding proteins (ModC), two transmembrane proteins (ModB) and a solute-binding protein (ModA).

The protein localises to the cell inner membrane. The catalysed reaction is molybdate(out) + ATP + H2O = molybdate(in) + ADP + phosphate + H(+). Functionally, part of the ABC transporter complex ModABC involved in molybdenum import. Responsible for energy coupling to the transport system. This is Molybdenum import ATP-binding protein ModC 2 from Bradyrhizobium diazoefficiens (strain JCM 10833 / BCRC 13528 / IAM 13628 / NBRC 14792 / USDA 110).